Reading from the N-terminus, the 225-residue chain is Tryptophan synthase beta chain (225 aa).

This sequence belongs to the TrpB family. As to quaternary structure, tetramer of two alpha and two beta chains. The cofactor is pyridoxal 5'-phosphate.

The catalysed reaction is (1S,2R)-1-C-(indol-3-yl)glycerol 3-phosphate + L-serine = D-glyceraldehyde 3-phosphate + L-tryptophan + H2O. It functions in the pathway amino-acid biosynthesis; L-tryptophan biosynthesis; L-tryptophan from chorismate: step 5/5. In terms of biological role, the beta subunit is responsible for the synthesis of L-tryptophan from indole and L-serine. The chain is Tryptophan synthase beta chain (trpB) from Buchnera aphidicola subsp. Rhopalosiphum padi.